We begin with the raw amino-acid sequence, 618 residues long: Transport protein particle subunit trs85-2 (618 aa).

This sequence belongs to the TRS85 family. Part of the multisubunit TRAPP (transport protein particle) complexes I and II.

The protein resides in the golgi apparatus. It is found in the cis-Golgi network. Component of the TRAPP I and TRAPP II complexes. TRAPP I plays a key role in the late stages of endoplasmic reticulum to Golgi traffic. TRAPP II seems to play a role in intra-Golgi transport. Has a role late in meiosis following DNA replication. The chain is Transport protein particle subunit trs85-2 (trs85-2) from Schizosaccharomyces pombe (strain 972 / ATCC 24843) (Fission yeast).